The following is a 402-amino-acid chain: Fugralins biosynthesis cluster protein 2 (402 aa).

Transmembrane regions (helical) follow at residues 28–48 (NCLA…CFLL), 109–129 (ILIF…AILV), 145–165 (IFWW…TAIV), 232–252 (VIFG…AVTV), and 264–284 (LAPL…IVCV). Disordered stretches follow at residues 312 to 335 (NPNT…TGPK) and 378 to 402 (TQDN…PWGV). Positions 324-334 (TKGSQLSSTGP) are enriched in polar residues. A glycan (N-linked (GlcNAc...) asparagine) is linked at Asn-381.

It belongs to the SAT4 family.

Its subcellular location is the membrane. The protein operates within secondary metabolite biosynthesis. In terms of biological role, part of the gene cluster that mediates the biosynthesis of the tetraketides fugralins such as linear fugralin A and cyclic fugralin B, volatile compounds that play a role in the asexual reproductive cycle but are not involved in pathogenicity. One of the key features of fugralins is the presence of a double methyl group, which is only rarely encountered in fungal secondary metabolites. As the fugralins cluster does not contain an independent methyltransferase, the PKS FGR1 is probably responsible for adding two methyl groups to the same carbon atom. Fugralin B is similar to fugralin A except for a cyclization between the carboxylic acid C-8 and the alcohol on C-4 resulting in a six membered lactone ring, probably catalyzed by the cyclase FGR4. The exact role of the individual cluster genes remains unknown and further work is needed to unravel the biosynthetic pathway. The protein is Fugralins biosynthesis cluster protein 2 of Gibberella zeae (strain ATCC MYA-4620 / CBS 123657 / FGSC 9075 / NRRL 31084 / PH-1) (Wheat head blight fungus).